The sequence spans 515 residues: MEAQTKVIIIDYGSQVTQLIARRVREAGVYSEIHPCIVTADQVRAMKPAAVILSGGPASVGEADAPTLEKGLLELGVPVLAICYGMQLLGHNLGGQLATSETREYGPADLTLLGDCPLWDGIDKSATTRVWMSHGDKVKTPPPGFAVVGRTATLDVAAMADDARRIYAVQFHPEVHHTEEGTRIINNFLFHVAKLKADWTMSSFVERAIKEMAETVGDRHVVCALSGGIDSTVVAVLLHKAIGKRLHCIFVDNGVLRLNEGQEVVDYLREHFDLNLKYVQAQRRFLDKLEGVEDPEQKRKIIGYTFIEVFDEEAKALGHVDFLAQGTLYPDVIESVSHKGPSAVIKSHHNVGGLPEKMNLKLIEPLRELFKDEVRKVAGELGLPDFIIWRHPFPGPGLAIRVIGEITEERLDILRKADKIVQAELMSSGWYRKVWQGFAVLLPLKTVGVMGDGRTYEHVIALRIVDSVDAMTADWARLPSELLERISSRIINEVKGVNRVVYDISSKPPSTIEWE.

The Glutamine amidotransferase type-1 domain maps to 6 to 198 (KVIIIDYGSQ…LFHVAKLKAD (193 aa)). The Nucleophile role is filled by cysteine 83. Catalysis depends on residues histidine 172 and glutamate 174. One can recognise a GMPS ATP-PPase domain in the interval 199–390 (WTMSSFVERA…LGLPDFIIWR (192 aa)). 226-232 (SGGIDST) is an ATP binding site.

Homodimer.

The catalysed reaction is XMP + L-glutamine + ATP + H2O = GMP + L-glutamate + AMP + diphosphate + 2 H(+). It functions in the pathway purine metabolism; GMP biosynthesis; GMP from XMP (L-Gln route): step 1/1. Catalyzes the synthesis of GMP from XMP. This is GMP synthase [glutamine-hydrolyzing] from Nitratidesulfovibrio vulgaris (strain DSM 19637 / Miyazaki F) (Desulfovibrio vulgaris).